Consider the following 200-residue polypeptide: Recombination protein RecR (200 aa).

The segment at Cys59 to Cys74 adopts a C4-type zinc-finger fold. Positions Ala82–Pro177 constitute a Toprim domain.

This sequence belongs to the RecR family.

Functionally, may play a role in DNA repair. It seems to be involved in an RecBC-independent recombinational process of DNA repair. It may act with RecF and RecO. The polypeptide is Recombination protein RecR (Burkholderia pseudomallei (strain 1106a)).